The sequence spans 270 residues: Glutamate 5-kinase (270 aa).

Lysine 18 provides a ligand contact to ATP. Substrate-binding residues include serine 54, aspartate 141, and asparagine 153. Residue serine 173 to aspartate 174 participates in ATP binding.

Belongs to the glutamate 5-kinase family.

It is found in the cytoplasm. It carries out the reaction L-glutamate + ATP = L-glutamyl 5-phosphate + ADP. Its pathway is amino-acid biosynthesis; L-proline biosynthesis; L-glutamate 5-semialdehyde from L-glutamate: step 1/2. Functionally, catalyzes the transfer of a phosphate group to glutamate to form L-glutamate 5-phosphate. In Leifsonia xyli subsp. xyli (strain CTCB07), this protein is Glutamate 5-kinase.